A 127-amino-acid polypeptide reads, in one-letter code: Large ribosomal subunit protein uL22 (127 aa).

It belongs to the universal ribosomal protein uL22 family. In terms of assembly, part of the 50S ribosomal subunit.

Its function is as follows. This protein binds specifically to 23S rRNA; its binding is stimulated by other ribosomal proteins, e.g. L4, L17, and L20. It is important during the early stages of 50S assembly. It makes multiple contacts with different domains of the 23S rRNA in the assembled 50S subunit and ribosome. The globular domain of the protein is located near the polypeptide exit tunnel on the outside of the subunit, while an extended beta-hairpin is found that lines the wall of the exit tunnel in the center of the 70S ribosome. The chain is Large ribosomal subunit protein uL22 from Methylorubrum extorquens (strain CM4 / NCIMB 13688) (Methylobacterium extorquens).